A 284-amino-acid polypeptide reads, in one-letter code: 2-dehydro-3-deoxyphosphooctonate aldolase (284 aa).

It belongs to the KdsA family.

Its subcellular location is the cytoplasm. The catalysed reaction is D-arabinose 5-phosphate + phosphoenolpyruvate + H2O = 3-deoxy-alpha-D-manno-2-octulosonate-8-phosphate + phosphate. Its pathway is carbohydrate biosynthesis; 3-deoxy-D-manno-octulosonate biosynthesis; 3-deoxy-D-manno-octulosonate from D-ribulose 5-phosphate: step 2/3. It functions in the pathway bacterial outer membrane biogenesis; lipopolysaccharide biosynthesis. In Histophilus somni (strain 2336) (Haemophilus somnus), this protein is 2-dehydro-3-deoxyphosphooctonate aldolase.